Reading from the N-terminus, the 1103-residue chain is Mediator of RNA polymerase II transcription subunit 14 (1103 aa).

2 disordered regions span residues 22 to 61 and 1043 to 1067; these read LNGV…GSDE and TTPK…PAIR. A compositionally biased stretch (polar residues) spans 23–36; that stretch reads NGVSSAPAGSSQLG.

It belongs to the Mediator complex subunit 14 family. In terms of assembly, component of the Mediator complex.

The protein localises to the nucleus. In terms of biological role, component of the Mediator complex, a coactivator involved in the regulated transcription of nearly all RNA polymerase II-dependent genes. Mediator functions as a bridge to convey information from gene-specific regulatory proteins to the basal RNA polymerase II transcription machinery. Mediator is recruited to promoters by direct interactions with regulatory proteins and serves as a scaffold for the assembly of a functional preinitiation complex with RNA polymerase II and the general transcription factors. The polypeptide is Mediator of RNA polymerase II transcription subunit 14 (rgr1) (Emericella nidulans (strain FGSC A4 / ATCC 38163 / CBS 112.46 / NRRL 194 / M139) (Aspergillus nidulans)).